The sequence spans 84 residues: MKKGIHPENYRPVVFKDMSNGDVFLSRSTCSTKETIEFEGETYPLVKLEISNTSHPFYTGKSKLVDTAGRVDKFMSRYGNRMKK.

This sequence belongs to the bacterial ribosomal protein bL31 family. Type B subfamily. As to quaternary structure, part of the 50S ribosomal subunit.

The sequence is that of Large ribosomal subunit protein bL31B from Phocaeicola vulgatus (strain ATCC 8482 / DSM 1447 / JCM 5826 / CCUG 4940 / NBRC 14291 / NCTC 11154) (Bacteroides vulgatus).